The following is a 180-amino-acid chain: Cytokinin-beta-glucosidase 2 (180 aa).

Functionally, hydrolyzes cytokinin glucosides thus liberating free cytokinins. This Panax ginseng (Korean ginseng) protein is Cytokinin-beta-glucosidase 2 (ROLC2).